A 301-amino-acid polypeptide reads, in one-letter code: Tyrosine recombinase XerC (301 aa).

A Core-binding (CB) domain is found at 1 to 89 (MGLDGLAAYL…SWRQYCVWLV (89 aa)). Residues 110-290 (RVPKALPQEW…DFDHIARLYD (181 aa)) form the Tyr recombinase domain. Residues Arg151, Lys175, His242, Arg245, and His268 contribute to the active site. Tyr277 functions as the O-(3'-phospho-DNA)-tyrosine intermediate in the catalytic mechanism.

It belongs to the 'phage' integrase family. XerC subfamily. As to quaternary structure, forms a cyclic heterotetrameric complex composed of two molecules of XerC and two molecules of XerD.

The protein localises to the cytoplasm. Site-specific tyrosine recombinase, which acts by catalyzing the cutting and rejoining of the recombining DNA molecules. The XerC-XerD complex is essential to convert dimers of the bacterial chromosome into monomers to permit their segregation at cell division. It also contributes to the segregational stability of plasmids. The sequence is that of Tyrosine recombinase XerC from Neisseria meningitidis serogroup B (strain ATCC BAA-335 / MC58).